Here is a 156-residue protein sequence, read N- to C-terminus: Glycine cleavage system H protein 2, mitochondrial (156 aa).

Residues 1-23 constitute a mitochondrion transit peptide; that stretch reads MACRLFWASRVASHLRISVAQRG. The 83-residue stretch at 47-129 folds into the Lipoyl-binding domain; that stretch reads KATFGITDHA…YEQGWIIKVE (83 aa). An N6-lipoyllysine modification is found at lysine 88. Serine 131 carries the phosphoserine modification.

It belongs to the GcvH family. The glycine cleavage system is composed of four proteins: P, T, L and H. The cofactor is (R)-lipoate.

It localises to the mitochondrion. In terms of biological role, the glycine decarboxylase (GDC) or glycine cleavage system catalyzes the degradation of glycine. The H protein shuttles the methylamine group of glycine from the P protein to the T protein. The protein is Glycine cleavage system H protein 2, mitochondrial (GDH2) of Arabidopsis thaliana (Mouse-ear cress).